Here is a 207-residue protein sequence, read N- to C-terminus: Small ribosomal subunit protein uS4 (207 aa).

Positions 31–55 (KCKLDSKPGQHGRTSGARTSDYGTQ) are disordered. The span at 42 to 53 (GRTSGARTSDYG) shows a compositional bias: polar residues. The S4 RNA-binding domain occupies 97-160 (SRLDNVVYRM…KKQARIIEAL (64 aa)).

This sequence belongs to the universal ribosomal protein uS4 family. As to quaternary structure, part of the 30S ribosomal subunit. Contacts protein S5. The interaction surface between S4 and S5 is involved in control of translational fidelity.

Functionally, one of the primary rRNA binding proteins, it binds directly to 16S rRNA where it nucleates assembly of the body of the 30S subunit. In terms of biological role, with S5 and S12 plays an important role in translational accuracy. This is Small ribosomal subunit protein uS4 from Burkholderia vietnamiensis (strain G4 / LMG 22486) (Burkholderia cepacia (strain R1808)).